Consider the following 824-residue polypeptide: Leucine--tRNA ligase (824 aa).

A 'HIGH' region motif is present at residues 41-51; sequence PYPSGTLHVGH. Residues 580 to 584 carry the 'KMSKS' region motif; that stretch reads KMSKS. K583 contacts ATP.

It belongs to the class-I aminoacyl-tRNA synthetase family.

Its subcellular location is the cytoplasm. It catalyses the reaction tRNA(Leu) + L-leucine + ATP = L-leucyl-tRNA(Leu) + AMP + diphosphate. The polypeptide is Leucine--tRNA ligase (Thermotoga petrophila (strain ATCC BAA-488 / DSM 13995 / JCM 10881 / RKU-1)).